A 133-amino-acid chain; its full sequence is ATP synthase epsilon chain (133 aa).

The protein belongs to the ATPase epsilon chain family. F-type ATPases have 2 components, CF(1) - the catalytic core - and CF(0) - the membrane proton channel. CF(1) has five subunits: alpha(3), beta(3), gamma(1), delta(1), epsilon(1). CF(0) has three main subunits: a, b and c.

The protein localises to the cell inner membrane. Produces ATP from ADP in the presence of a proton gradient across the membrane. The chain is ATP synthase epsilon chain from Desulfosudis oleivorans (strain DSM 6200 / JCM 39069 / Hxd3) (Desulfococcus oleovorans).